Consider the following 557-residue polypeptide: Inositol-3-phosphate synthase 1 (557 aa).

Residues G67, G68, N69, N70, D141, S177, V178, Q188, R191, T228, A229, N230, T231, G278, S279, D303, S306, N337, N338, D339, and K352 each contribute to the NAD(+) site. S279 carries the post-translational modification Phosphoserine. S357 carries the post-translational modification Phosphoserine. Positions 390, 391, 419, and 420 each coordinate NAD(+). S523 is subject to Phosphoserine. The segment at 527–557 (CKKGSAPTAPNGCTGDANGHSQAEAPQMPTT) is disordered.

Belongs to the myo-inositol 1-phosphate synthase family. Requires NAD(+) as cofactor. In terms of tissue distribution, expressed in testis (at protein level).

The protein resides in the cytoplasm. It catalyses the reaction D-glucose 6-phosphate = 1D-myo-inositol 3-phosphate. It participates in polyol metabolism; myo-inositol biosynthesis; myo-inositol from D-glucose 6-phosphate: step 1/2. Functionally, key enzyme in myo-inositol biosynthesis pathway that catalyzes the conversion of glucose 6-phosphate to 1-myo-inositol 1-phosphate in a NAD-dependent manner. Rate-limiting enzyme in the synthesis of all inositol-containing compounds. The protein is Inositol-3-phosphate synthase 1 (ISYNA1) of Bos taurus (Bovine).